A 349-amino-acid chain; its full sequence is Merozoite surface protein P38 (349 aa).

The N-terminal stretch at 1–21 (MKRWSIITGIVIIFCILTCKG) is a signal peptide. 6-Cys domains are found at residues 22–149 (QVEN…ISNG) and 153–301 (KIPG…YLTN). Intrachain disulfides connect cysteine 77/cysteine 127, cysteine 157/cysteine 183, cysteine 197/cysteine 278, and cysteine 208/cysteine 276. N-linked (GlcNAc...) asparagine glycans are attached at residues asparagine 294, asparagine 295, and asparagine 301. Asparagine 315 carries the GPI-anchor amidated asparagine lipid modification. Residues 316 to 349 (SEIFERIEREEISFAFSSYLSITLILLYLFFLNF) constitute a propeptide, removed in mature form.

It is found in the cell surface. It localises to the cell membrane. The protein is Merozoite surface protein P38 (PFS38) of Plasmodium falciparum (isolate 3D7).